A 257-amino-acid polypeptide reads, in one-letter code: Matrix protein (257 aa).

The short motif at 193 to 205 (VAPYAGLTLVINI) is the Nuclear export signal element.

The protein belongs to the pneumovirinae M protein family. In terms of assembly, forms dimers. Forms higher-order oligomers. Interacts with glycoprotein G (via N-terminus). Interacts with protein M2-1; this interaction directs the matrix protein localization to cytoplasmic inclusions comprising viral proteins L, N, P, and M2-1 and mediates the matrix protein association with the nucleocapsid.

The protein localises to the virion. The protein resides in the host cytoplasm. It localises to the host nucleus. It is found in the host cell membrane. Its function is as follows. Plays a crucial role in virus assembly into filaments and budding. Early in infection, localizes in the nucleus where it may inhibit host cell transcription. Later in infection, traffics to the cytoplasm to associate with inclusion bodies, the site of viral transcription and replication. During virus assembly and budding, acts as a bridge between the nucleocapsid and the lipid bilayer. The sequence is that of Matrix protein (M) from Murine pneumonia virus (strain 15) (MPV).